The primary structure comprises 183 residues: MNDVELVVLADEFGKPSGTAVKSEVHTTDTPLHFAFSCYVRNNKGDLLITRRALSKKTWPGVWTNSACGHLMPGETPEQAVARRVPHEIGISQDKLVNIACVLPDFSYRAVDSRGIVEWEICPVFTAAVTDDALLPEAEEVDSLVWVEPSKLIHAVHSAPFAFSPWMVEQLQHEALRTALTTS.

Residues histidine 26 and histidine 33 each coordinate Mn(2+). One can recognise a Nudix hydrolase domain in the interval 31–169 (PLHFAFSCYV…PFAFSPWMVE (139 aa)). Cysteine 68 is an active-site residue. Cysteine 68 is a Mg(2+) binding site. A Mn(2+)-binding site is contributed by histidine 70. A Mg(2+)-binding site is contributed by glutamate 88. The Mn(2+) site is built by glutamate 118 and glutamate 120. Residue glutamate 120 is part of the active site.

It belongs to the IPP isomerase type 1 family. It depends on Mg(2+) as a cofactor. Mn(2+) is required as a cofactor.

The protein resides in the cytoplasm. It carries out the reaction isopentenyl diphosphate = dimethylallyl diphosphate. Its pathway is isoprenoid biosynthesis; dimethylallyl diphosphate biosynthesis; dimethylallyl diphosphate from isopentenyl diphosphate: step 1/1. Its function is as follows. Catalyzes the 1,3-allylic rearrangement of the homoallylic substrate isopentenyl (IPP) to its highly electrophilic allylic isomer, dimethylallyl diphosphate (DMAPP). The protein is Isopentenyl-diphosphate Delta-isomerase of Corynebacterium diphtheriae (strain ATCC 700971 / NCTC 13129 / Biotype gravis).